A 114-amino-acid chain; its full sequence is Flagellar hook-basal body complex protein FliE (114 aa).

Belongs to the FliE family.

Its subcellular location is the bacterial flagellum basal body. The protein is Flagellar hook-basal body complex protein FliE of Burkholderia cenocepacia (strain ATCC BAA-245 / DSM 16553 / LMG 16656 / NCTC 13227 / J2315 / CF5610) (Burkholderia cepacia (strain J2315)).